Consider the following 458-residue polypeptide: F-box/WD repeat-containing protein 9 (458 aa).

Methionine 1 is modified (N-acetylmethionine). Residues 1–28 (MELPPGPRDDPHAWDDDSDPELEPDTDA) are disordered. The span at 16–28 (DDSDPELEPDTDA) shows a compositional bias: acidic residues. 2 positions are modified to phosphoserine: serine 18 and serine 59. In terms of domain architecture, F-box spans 76–123 (VPGLLSLPPELLLEICAYLDARLVLHVLPRVCHALRDLVRDRVTWRLR). 7 WD repeats span residues 171 to 210 (GHFA…VEPS), 224 to 261 (THKG…QQFG), 264 to 301 (KGKA…ALLK), 305 to 342 (LHSS…VLQR), 344 to 381 (QLDS…FQLV), 387 to 424 (GHRS…RTIC), and 427 to 458 (SHHN…RLQA).

As to quaternary structure, interacts with SKP1 and CUL1.

Its function is as follows. Substrate-recognition component of the SCF (SKP1-CUL1-F-box protein)-type E3 ubiquitin ligase complex. In Bos taurus (Bovine), this protein is F-box/WD repeat-containing protein 9 (FBXW9).